We begin with the raw amino-acid sequence, 183 residues long: Ras-related protein Rap-2a (183 aa).

A GTP-binding site is contributed by G10–S17. Residues Y32–Y40 carry the Effector region motif. Residue T35 is glycosylated ((Microbial infection) O-linked (Glc) threonine; by C.difficile toxin TcdA, and by P.sordellii toxin TcsL). GTP-binding positions include D57–T61 and N116–D119. Residues C176 and C177 are each lipidated (S-palmitoyl cysteine). At C180 the chain carries Cysteine methyl ester. C180 is lipidated: S-farnesyl cysteine. A propeptide spans N181 to Q183 (removed in mature form).

The protein belongs to the small GTPase superfamily. Ras family. As to quaternary structure, interacts (GTP-bound form) with RUNDC3A. Interacts with RGS14; the interaction is GTP-dependent. Interacts with PLCE1. Interacts with ARHGAP29, SGSM1, SGSM2 and SGSM3. Interacts (GTP-bound form preferentially) with TNIK (via the CNH domain); the interaction is direct and recruits RAP2A to the E3 ubiquitin ligase NEDD4. Interacts with MINK1. Interacts (GTP-bound form preferentially) with MAP4K4. Interacts with cytoskeletal actin. In terms of processing, ubiquitinated; undergoes 'Lys-63' monoubiquitination and diubiquitination by NEDD4. Multiple lysine residues are probably modified. Ubiquitination requires TNIK, prevents interaction with effectors and inactivates RAP2A. Ubiquitination by the ECS(RAB40B) complex leads to RAP2A localization to lamellipodia plasma membrane, activation, and regulation of sorting at early endosomes for recycling to the lamellipodia plasma membrane. Post-translationally, palmitoylated. Palmitoylation is required for association with recycling endosome membranes and activation of TNIK. (Microbial infection) Glucosylated at Thr-35 by C.difficile toxin TcdA in the colonic epithelium, and by P.sordellii toxin TcsL in the vascular endothelium.

The protein resides in the midbody. It localises to the cell projection. Its subcellular location is the lamellipodium membrane. The protein localises to the golgi apparatus. It is found in the recycling endosome membrane. The protein resides in the lysosome. The catalysed reaction is GTP + H2O = GDP + phosphate + H(+). Activated by the guanine nucleotide-exchange factors RAPGEF3 and RAPGEF4 in a cAMP-dependent manner. Nucleotide exchange is also specifically stimulated by RAPGEF5, RASGEF1A and RASGEF1B. In terms of biological role, small GTP-binding protein which cycles between a GDP-bound inactive and a GTP-bound active form. In its active form interacts with and regulates several effectors including MAP4K4, MINK1 and TNIK. Part of a signaling complex composed of NEDD4, RAP2A and TNIK which regulates neuronal dendrite extension and arborization during development. More generally, it is part of several signaling cascades and regulates cytoskeletal rearrangements, cell migration, cell adhesion and cell spreading. The chain is Ras-related protein Rap-2a from Homo sapiens (Human).